Consider the following 557-residue polypeptide: Formate--tetrahydrofolate ligase 2 (557 aa).

66–73 (TPAGEGKT) serves as a coordination point for ATP.

Belongs to the formate--tetrahydrofolate ligase family.

It catalyses the reaction (6S)-5,6,7,8-tetrahydrofolate + formate + ATP = (6R)-10-formyltetrahydrofolate + ADP + phosphate. It functions in the pathway one-carbon metabolism; tetrahydrofolate interconversion. This Streptococcus pyogenes serotype M4 (strain MGAS10750) protein is Formate--tetrahydrofolate ligase 2.